The chain runs to 274 residues: Serine/threonine-protein kinase 1 (274 aa).

The 258-residue stretch at 16–273 (AVLAPKVVNG…HSFLASRHDY (258 aa)) folds into the Protein kinase domain. ATP contacts are provided by residues 22–30 (VVNGRFGKM) and Lys-46. Catalysis depends on Asp-134, which acts as the Proton acceptor.

It belongs to the protein kinase superfamily. Ser/Thr protein kinase family.

The catalysed reaction is L-seryl-[protein] + ATP = O-phospho-L-seryl-[protein] + ADP + H(+). It carries out the reaction L-threonyl-[protein] + ATP = O-phospho-L-threonyl-[protein] + ADP + H(+). This chain is Serine/threonine-protein kinase 1 (PK1), found in Orgyia pseudotsugata multicapsid polyhedrosis virus (OpMNPV).